Consider the following 106-residue polypeptide: Large ribosomal subunit protein uL24 (106 aa).

It belongs to the universal ribosomal protein uL24 family. As to quaternary structure, part of the 50S ribosomal subunit.

Functionally, one of two assembly initiator proteins, it binds directly to the 5'-end of the 23S rRNA, where it nucleates assembly of the 50S subunit. One of the proteins that surrounds the polypeptide exit tunnel on the outside of the subunit. This chain is Large ribosomal subunit protein uL24, found in Polaromonas sp. (strain JS666 / ATCC BAA-500).